The following is an 880-amino-acid chain: Translation initiation factor IF-2 (880 aa).

The span at 143–228 shows a compositional bias: basic and acidic residues; it reads EAEAKAKAKA…EAERNGDHHI (86 aa). Residues 143–289 form a disordered region; sequence EAEAKAKAKA…APESMAHGFN (147 aa). Residues 249–262 show a composition bias toward basic residues; it reads GRRARNKSNAKKRG. Residues 380–549 enclose the tr-type G domain; that stretch reads SRAPVVTIMG…LLQAEVLELK (170 aa). A G1 region spans residues 389–396; that stretch reads GHVDHGKT. Residue 389–396 participates in GTP binding; sequence GHVDHGKT. A G2 region spans residues 414–418; sequence GITQH. A G3 region spans residues 435 to 438; that stretch reads DTPG. GTP is bound by residues 435–439 and 489–492; these read DTPGH and NKMD. The interval 489 to 492 is G4; it reads NKMD. Residues 525–527 are G5; it reads SAK.

It belongs to the TRAFAC class translation factor GTPase superfamily. Classic translation factor GTPase family. IF-2 subfamily.

Its subcellular location is the cytoplasm. One of the essential components for the initiation of protein synthesis. Protects formylmethionyl-tRNA from spontaneous hydrolysis and promotes its binding to the 30S ribosomal subunits. Also involved in the hydrolysis of GTP during the formation of the 70S ribosomal complex. The chain is Translation initiation factor IF-2 from Shewanella putrefaciens (strain CN-32 / ATCC BAA-453).